Here is a 156-residue protein sequence, read N- to C-terminus: Probable cyclic pyranopterin monophosphate synthase (156 aa).

Methionine 109–aspartate 110 is a substrate binding site. The active site involves aspartate 124.

Belongs to the MoaC family. Homohexamer; trimer of dimers.

It carries out the reaction (8S)-3',8-cyclo-7,8-dihydroguanosine 5'-triphosphate = cyclic pyranopterin phosphate + diphosphate. It participates in cofactor biosynthesis; molybdopterin biosynthesis. Functionally, catalyzes the conversion of (8S)-3',8-cyclo-7,8-dihydroguanosine 5'-triphosphate to cyclic pyranopterin monophosphate (cPMP). This is Probable cyclic pyranopterin monophosphate synthase from Methanopyrus kandleri (strain AV19 / DSM 6324 / JCM 9639 / NBRC 100938).